The sequence spans 642 residues: 4-hydroxy-3-methylbut-2-enyl diphosphate reductase (642 aa).

Positions 1–282 (MRKVMLAEKA…EEAISKMSEN (282 aa)) are 4-hydroxy-3-methylbut-2-enyl diphosphate reductase. Residue C13 participates in [4Fe-4S] cluster binding. (2E)-4-hydroxy-3-methylbut-2-enyl diphosphate is bound by residues H42 and H77. Dimethylallyl diphosphate contacts are provided by H42 and H77. Isopentenyl diphosphate is bound by residues H42 and H77. A [4Fe-4S] cluster-binding site is contributed by C99. H127 contacts (2E)-4-hydroxy-3-methylbut-2-enyl diphosphate. Residue H127 coordinates dimethylallyl diphosphate. Isopentenyl diphosphate is bound at residue H127. The active-site Proton donor is the E129. T165 lines the (2E)-4-hydroxy-3-methylbut-2-enyl diphosphate pocket. C193 contributes to the [4Fe-4S] cluster binding site. (2E)-4-hydroxy-3-methylbut-2-enyl diphosphate contacts are provided by S221, S222, N223, and S266. S221, S222, N223, and S266 together coordinate dimethylallyl diphosphate. Residues S221, S222, N223, and S266 each contribute to the isopentenyl diphosphate site. 3 consecutive S1 motif domains span residues 309–377 (GASV…LSVK), 484–552 (GQVV…LSVK), and 569–638 (GSVV…LSIR).

This sequence in the N-terminal section; belongs to the IspH family. [4Fe-4S] cluster is required as a cofactor.

The catalysed reaction is isopentenyl diphosphate + 2 oxidized [2Fe-2S]-[ferredoxin] + H2O = (2E)-4-hydroxy-3-methylbut-2-enyl diphosphate + 2 reduced [2Fe-2S]-[ferredoxin] + 2 H(+). The enzyme catalyses dimethylallyl diphosphate + 2 oxidized [2Fe-2S]-[ferredoxin] + H2O = (2E)-4-hydroxy-3-methylbut-2-enyl diphosphate + 2 reduced [2Fe-2S]-[ferredoxin] + 2 H(+). It participates in isoprenoid biosynthesis; dimethylallyl diphosphate biosynthesis; dimethylallyl diphosphate from (2E)-4-hydroxy-3-methylbutenyl diphosphate: step 1/1. The protein operates within isoprenoid biosynthesis; isopentenyl diphosphate biosynthesis via DXP pathway; isopentenyl diphosphate from 1-deoxy-D-xylulose 5-phosphate: step 6/6. Catalyzes the conversion of 1-hydroxy-2-methyl-2-(E)-butenyl 4-diphosphate (HMBPP) into a mixture of isopentenyl diphosphate (IPP) and dimethylallyl diphosphate (DMAPP). Acts in the terminal step of the DOXP/MEP pathway for isoprenoid precursor biosynthesis. In Clostridium acetobutylicum (strain ATCC 824 / DSM 792 / JCM 1419 / IAM 19013 / LMG 5710 / NBRC 13948 / NRRL B-527 / VKM B-1787 / 2291 / W), this protein is 4-hydroxy-3-methylbut-2-enyl diphosphate reductase.